A 264-amino-acid polypeptide reads, in one-letter code: Neuferricin (264 aa).

The signal sequence occupies residues 1–22 (MLRCGGRGLLLGLAVAAAAVMA). One can recognise a Cytochrome b5 heme-binding domain in the interval 35-134 (FRLFIPEELS…KNYVCVGRVT (100 aa)).

Belongs to the cytochrome b5 family. MAPR subfamily.

The protein resides in the secreted. In terms of biological role, heme-binding protein which promotes neuronal but not astrocyte differentiation. This is Neuferricin from Homo sapiens (Human).